Consider the following 173-residue polypeptide: Shikimate kinase 1 (173 aa).

14–19 provides a ligand contact to ATP; that stretch reads GAGKST. Serine 18 is a Mg(2+) binding site. Substrate-binding residues include aspartate 36, arginine 60, and glycine 82. Residue arginine 120 participates in ATP binding. A substrate-binding site is contributed by arginine 140. ATP is bound at residue glutamine 157.

Belongs to the shikimate kinase family. As to quaternary structure, monomer. Mg(2+) serves as cofactor.

It is found in the cytoplasm. The enzyme catalyses shikimate + ATP = 3-phosphoshikimate + ADP + H(+). The protein operates within metabolic intermediate biosynthesis; chorismate biosynthesis; chorismate from D-erythrose 4-phosphate and phosphoenolpyruvate: step 5/7. In terms of biological role, catalyzes the specific phosphorylation of the 3-hydroxyl group of shikimic acid using ATP as a cosubstrate. The polypeptide is Shikimate kinase 1 (Pectobacterium atrosepticum (strain SCRI 1043 / ATCC BAA-672) (Erwinia carotovora subsp. atroseptica)).